Reading from the N-terminus, the 334-residue chain is Beta-hexosaminidase (334 aa).

Residues Asp62, Arg70, Arg130, and 160–161 contribute to the substrate site; that span reads KH. Residue His173 is the Proton donor/acceptor of the active site. Asp243 functions as the Nucleophile in the catalytic mechanism.

The protein belongs to the glycosyl hydrolase 3 family. NagZ subfamily.

The protein resides in the cytoplasm. The catalysed reaction is Hydrolysis of terminal non-reducing N-acetyl-D-hexosamine residues in N-acetyl-beta-D-hexosaminides.. Its pathway is cell wall biogenesis; peptidoglycan recycling. Plays a role in peptidoglycan recycling by cleaving the terminal beta-1,4-linked N-acetylglucosamine (GlcNAc) from peptide-linked peptidoglycan fragments, giving rise to free GlcNAc, anhydro-N-acetylmuramic acid and anhydro-N-acetylmuramic acid-linked peptides. The polypeptide is Beta-hexosaminidase (Photobacterium profundum (strain SS9)).